We begin with the raw amino-acid sequence, 398 residues long: KLGVPQPEGGYATSQKEAIEVAKRIGFPVLVRPSYVLGGRAMEIVYDEMDLERYMKEAVRVSHEHPILIDDFLEAASEIDVDAVCDQKDVIIGAIMEHIEEAGVHSGDSACVIPPQSLSPEVLDQVRDYTRKIALALRVKGLINIQMAEKGGKVYVLEANPRSSRTIPFVSKAVGIPLAKIAAKVIVGHSLKSLGYMDEPKPKHVSIKEVLLPFDKLPGADPVLGPEMKSTGEVMGIDYDFGRAYYKAELAADNVLPLTGKVFLSIRNADKTELVDVAKKLQAAGLELMGTEGTVNYLAQHGVFMDVVKKVHDGSPNVIDMMRRDEVNLIINTPTSKQSRRDGSRIRRAAVDFKVPYITTMQAAIAAAAAIETMKKGEELTIKSINEYHKEMEEENKV.

An ATP-grasp domain is found at 1–187 (KLGVPQPEGG…LAKIAAKVIV (187 aa)). The carbamoyl phosphate synthetic domain stretch occupies residues 1 to 255 (KLGVPQPEGG…YKAELAADNV (255 aa)). ATP is bound by residues R32, D71, L73, E78, G103, V104, H105, S106, Q146, and E158. Q146, E158, and N160 together coordinate Mg(2+). Residues Q146, E158, and N160 each contribute to the Mn(2+) site. In terms of domain architecture, MGS-like spans 254-395 (NVLPLTGKVF…NEYHKEMEEE (142 aa)). Positions 256 to 398 (LPLTGKVFLS…HKEMEEENKV (143 aa)) are allosteric domain.

The protein belongs to the CarB family. As to quaternary structure, composed of two chains; the small (or glutamine) chain promotes the hydrolysis of glutamine to ammonia, which is used by the large (or ammonia) chain to synthesize carbamoyl phosphate. Tetramer of heterodimers (alpha,beta)4. The cofactor is Mg(2+). Mn(2+) is required as a cofactor.

It catalyses the reaction hydrogencarbonate + L-glutamine + 2 ATP + H2O = carbamoyl phosphate + L-glutamate + 2 ADP + phosphate + 2 H(+). It carries out the reaction hydrogencarbonate + NH4(+) + 2 ATP = carbamoyl phosphate + 2 ADP + phosphate + 2 H(+). The protein operates within amino-acid biosynthesis; L-arginine biosynthesis; carbamoyl phosphate from bicarbonate: step 1/1. It participates in pyrimidine metabolism; UMP biosynthesis via de novo pathway; (S)-dihydroorotate from bicarbonate: step 1/3. Its function is as follows. Large subunit of the glutamine-dependent carbamoyl phosphate synthetase (CPSase). CPSase catalyzes the formation of carbamoyl phosphate from the ammonia moiety of glutamine, carbonate, and phosphate donated by ATP, constituting the first step of 2 biosynthetic pathways, one leading to arginine and/or urea and the other to pyrimidine nucleotides. The large subunit (synthetase) binds the substrates ammonia (free or transferred from glutamine from the small subunit), hydrogencarbonate and ATP and carries out an ATP-coupled ligase reaction, activating hydrogencarbonate by forming carboxy phosphate which reacts with ammonia to form carbamoyl phosphate. The chain is Carbamoyl phosphate synthase large chain from Methanosarcina barkeri.